The sequence spans 628 residues: Putative pentatricopeptide repeat-containing protein At3g13770, mitochondrial (628 aa).

A mitochondrion-targeting transit peptide spans 1–19 (MFNLMRLIHRSFSSSPTNY). 11 PPR repeats span residues 51 to 85 (GFHG…RYLP), 86 to 116 (ATYL…MPEK), 117 to 151 (NVVS…DGKP), 152 to 186 (NEFT…NYDS), 187 to 217 (HIFV…LPER), 218 to 252 (DVVS…GMSP), 253 to 287 (NYVT…ELPF), 288 to 318 (YAVL…MPER), 319 to 353 (TAIS…KRVK), 355 to 389 (DAVT…EYGT), and 392 to 422 (GTEH…MPSK). A type E motif region spans residues 427–502 (VLGSLLGACR…EPGRSWIQHE (76 aa)). A type E(+) motif region spans residues 503 to 533 (QTLHYFHANDRTHPRREEVLAKMKEISIKMK). Residues 534 to 628 (QAGYVPDLSC…DGICSCGDYW (95 aa)) are type DYW motif.

The protein belongs to the PPR family. PCMP-H subfamily.

The protein resides in the mitochondrion. This is Putative pentatricopeptide repeat-containing protein At3g13770, mitochondrial (PCMP-H85) from Arabidopsis thaliana (Mouse-ear cress).